The following is a 399-amino-acid chain: Developmentally-regulated G-protein 2 (399 aa).

An OBG-type G domain is found at 63–288 (GRVALIGFPS…LLARMWDEMG (226 aa)). Residues 69 to 76 (GFPSVGKS), 115 to 119 (DLPGI), and 246 to 249 (NKID) contribute to the GTP site. Positions 288-366 (GLVRVYSKPQ…EDEDVVQIVK (79 aa)) constitute a TGS domain. The disordered stretch occupies residues 372-399 (EGGRGRFKSHSNAPARIADREKKAPLKQ). The span at 388 to 399 (IADREKKAPLKQ) shows a compositional bias: basic and acidic residues.

Belongs to the TRAFAC class OBG-HflX-like GTPase superfamily. OBG GTPase family.

The protein resides in the cytoplasm. Its function is as follows. Binds GDP and GTP, and has low GTPase activity. This Arabidopsis thaliana (Mouse-ear cress) protein is Developmentally-regulated G-protein 2 (DRG2).